Here is a 274-residue protein sequence, read N- to C-terminus: Cytochrome b-c1 complex subunit Rieske, mitochondrial (274 aa).

Residues 79-110 are Mitochondrial matrix-facing; the sequence is SHTDVKVPDFSDYRRAEVLDSTKSSKESSEAR. Residues 111–137 form a helical membrane-spanning segment; the sequence is KGFSYLVTATTTVGVAYAAKNVVSQFV. The Mitochondrial intermembrane portion of the chain corresponds to 138–274; sequence SSMSASADVL…FTSDDVVVVG (137 aa). The region spanning 187 to 272 is the Rieske domain; it reads EAAVEVSQLR…YEFTSDDVVV (86 aa). [2Fe-2S] cluster is bound by residues cysteine 217, histidine 219, cysteine 236, histidine 239, and serine 241. Cysteine 222 and cysteine 238 are oxidised to a cystine.

This sequence belongs to the Rieske iron-sulfur protein family. Component of the ubiquinol-cytochrome c oxidoreductase (cytochrome b-c1 complex, complex III, CIII), a multisubunit enzyme composed of 11 subunits. The complex is composed of 3 respiratory subunits cytochrome b, cytochrome c1 and Rieske protein UQCRFS1, 2 core protein subunits UQCRC1/QCR1 and UQCRC2/QCR2, and 6 low-molecular weight protein subunits UQCRH/QCR6, UQCRB/QCR7, UQCRQ/QCR8, UQCR10/QCR9, UQCR11/QCR10 and subunit 9, the cleavage product of Rieske protein UQCRFS1. The complex exists as an obligatory dimer and forms supercomplexes (SCs) in the inner mitochondrial membrane with NADH-ubiquinone oxidoreductase (complex I, CI) and cytochrome c oxidase (complex IV, CIV), resulting in different assemblies (supercomplex SCI(1)III(2)IV(1) and megacomplex MCI(2)III(2)IV(2)). Incorporation of the Rieske protein UQCRFS1 is the penultimate step in complex III assembly. Interacts with TTC19, which is involved in the clearance of UQCRFS1 fragments. As to quaternary structure, component of the ubiquinol-cytochrome c oxidoreductase (cytochrome b-c1 complex, complex III, CIII). Subunit 9 corresponds to the mitochondrial targeting sequence (MTS) of Rieske protein UQCRFS1. It is retained after processing and incorporated inside complex III, where it remains bound to the complex and localizes between the 2 core subunits UQCRC1/QCR1 and UQCRC2/QCR2. The cofactor is [2Fe-2S] cluster. In terms of processing, proteolytic processing is necessary for the correct insertion of UQCRFS1 in the complex III dimer. Several fragments are generated during UQCRFS1 insertion, most probably due to the endogenous matrix-processing peptidase (MPP) activity of the 2 core protein subunits UQCRC1/QCR1 and UQCRC2/QCR2, which are homologous to the 2 mitochondrial-processing peptidase (MPP) subunits beta-MPP and alpha-MPP respectively. The action of the protease is also necessary for the clearance of the UQCRFS1 fragments.

The protein localises to the mitochondrion inner membrane. It catalyses the reaction a quinol + 2 Fe(III)-[cytochrome c](out) = a quinone + 2 Fe(II)-[cytochrome c](out) + 2 H(+)(out). Its function is as follows. Component of the ubiquinol-cytochrome c oxidoreductase, a multisubunit transmembrane complex that is part of the mitochondrial electron transport chain which drives oxidative phosphorylation. The respiratory chain contains 3 multisubunit complexes succinate dehydrogenase (complex II, CII), ubiquinol-cytochrome c oxidoreductase (cytochrome b-c1 complex, complex III, CIII) and cytochrome c oxidase (complex IV, CIV), that cooperate to transfer electrons derived from NADH and succinate to molecular oxygen, creating an electrochemical gradient over the inner membrane that drives transmembrane transport and the ATP synthase. The cytochrome b-c1 complex catalyzes electron transfer from ubiquinol to cytochrome c, linking this redox reaction to translocation of protons across the mitochondrial inner membrane, with protons being carried across the membrane as hydrogens on the quinol. In the process called Q cycle, 2 protons are consumed from the matrix, 4 protons are released into the intermembrane space and 2 electrons are passed to cytochrome c. The Rieske protein is a catalytic core subunit containing a [2Fe-2S] iron-sulfur cluster. It cycles between 2 conformational states during catalysis to transfer electrons from the quinol bound in the Q(0) site in cytochrome b to cytochrome c1. Incorporation of UQCRFS1 is the penultimate step in complex III assembly. In terms of biological role, component of the ubiquinol-cytochrome c oxidoreductase (cytochrome b-c1 complex, complex III, CIII). UQCRFS1 undergoes proteolytic processing once it is incorporated in the complex III dimer. One of the fragments, called subunit 9, corresponds to its mitochondrial targeting sequence (MTS). The proteolytic processing is necessary for the correct insertion of UQCRFS1 in the complex III dimer, but the persistence of UQCRFS1-derived fragments may prevent newly imported UQCRFS1 to be processed and assembled into complex III and is detrimental for the complex III structure and function. The polypeptide is Cytochrome b-c1 complex subunit Rieske, mitochondrial (Mus musculus (Mouse)).